The chain runs to 166 residues: Transcriptional repressor NrdR (166 aa).

Residues 3 to 34 (CPFCHFVETDVIDTRKLYEGEVIRRRRRCRAC) fold into a zinc finger. Residues 49-139 (LMVVKKDGTR…VYRAFTDIGK (91 aa)) enclose the ATP-cone domain.

It belongs to the NrdR family. The cofactor is Zn(2+).

In terms of biological role, negatively regulates transcription of bacterial ribonucleotide reductase nrd genes and operons by binding to NrdR-boxes. The polypeptide is Transcriptional repressor NrdR (Chloroflexus aurantiacus (strain ATCC 29364 / DSM 637 / Y-400-fl)).